We begin with the raw amino-acid sequence, 152 residues long: Ribosome maturation factor RimP (152 aa).

This sequence belongs to the RimP family.

It is found in the cytoplasm. In terms of biological role, required for maturation of 30S ribosomal subunits. This chain is Ribosome maturation factor RimP, found in Idiomarina loihiensis (strain ATCC BAA-735 / DSM 15497 / L2-TR).